A 464-amino-acid polypeptide reads, in one-letter code: Lysosomal dipeptide transporter MFSD1 (464 aa).

The Dileucine internalization motif motif lies at 11-12; it reads LL. S20 carries the post-translational modification Phosphoserine. Transmembrane regions (helical) follow at residues 38–58, 82–102, 112–132, 134–154, 190–210, 214–234, 265–285, 303–323, 330–350, 360–380, 391–411, and 417–437; these read LAHRLVVLSLMCFLGFGSYFC, LLYAWYSWPNVVLCFLGGFLI, TVIFSCFVCIGQVIFALGGIF, AFWLMELGRFVFGIGGESLAV, LMGWLYGKIEALLGSAGHMTL, LMIGCITCIFSLICALALAYL, LILVFVICVCYYVAVFPFIGL, AINSIVYIISAPMSPLFGLLV, IIWVLYAVAATLVSHMMLAFT, LLGFSYSLLACALWPMVAFIV, FMQSIQNLGLAVIAILAGMIL, and LLLEVFFIACVSLSLLAVVCL.

Belongs to the major facilitator superfamily. Homodimer. Interacts with lysosomal protein GLMP (via lumenal domain); the interaction starts while both proteins are still in the endoplasmic reticulum and is required for stabilization of MFSD1 in lysosomes but has no direct effect on its targeting to lysosomes or transporter activity. In terms of processing, not N-glycosylated. In terms of tissue distribution, in brain, expressed in the cortex, striatum hippocampus, hypothalamus, thalamus and brainstem (at protein level). Widely expressed with highest levels in kidney and spleen (at protein level).

Its subcellular location is the lysosome membrane. The enzyme catalyses L-alpha-aminoacyl-L-arginine(out) = L-alpha-aminoacyl-L-arginine(in). It catalyses the reaction L-arginyl-L-alpha-amino acid(out) = L-arginyl-L-alpha-amino acid(in). It carries out the reaction L-arginyl-glycine(out) = L-arginyl-glycine(in). The catalysed reaction is L-alpha-aminoacyl-L-lysine(out) = L-alpha-aminoacyl-L-lysine(in). The enzyme catalyses L-aspartyl-L-lysine(out) = L-aspartyl-L-lysine(in). It catalyses the reaction L-alanyl-L-lysine(out) = L-alanyl-L-lysine(in). It carries out the reaction L-lysyl-L-alpha-amino acid(out) = L-lysyl-L-alpha-amino acid(in). The catalysed reaction is L-lysyl-L-alanine(out) = L-lysyl-L-alanine(in). The enzyme catalyses L-lysyl-L-lysine(out) = L-lysyl-L-lysine(in). It catalyses the reaction L-lysyl-glycine(out) = L-lysyl-glycine(in). It carries out the reaction L-alpha-aminoacyl-L-histidine(out) = L-alpha-aminoacyl-L-histidine(in). The catalysed reaction is L-histidyl-L-alpha-amino acid(out) = L-histidyl-L-alpha-amino acid(in). The enzyme catalyses L-histidyl-glycine(out) = L-histidyl-glycine(in). In terms of biological role, lysosomal dipeptide uniporter that selectively exports lysine, arginine or histidine-containing dipeptides with a net positive charge from the lysosome lumen into the cytosol. Could play a role in a specific type of protein O-glycosylation indirectly regulating macrophages migration and tissue invasion. Also essential for liver homeostasis. This Mus musculus (Mouse) protein is Lysosomal dipeptide transporter MFSD1.